The chain runs to 310 residues: Calbindin-32 (310 aa).

EF-hand domains are found at residues 35 to 70 (LSAN…FVSS), 84 to 120 (TMLE…EENF), 131 to 166 (ESSV…LLKE), 177 to 212 (KLIE…KENF), 224 to 259 (LTKE…LLEL), and 283 to 304 (TDKH…LAKI). 25 residues coordinate Ca(2+): Asp-48, Asp-50, Asn-52, Tyr-54, Glu-59, Asp-98, Asn-100, Asp-102, Lys-104, Glu-109, Asp-144, Asp-146, Ser-148, Tyr-150, Glu-155, Asp-190, Asn-192, Asp-194, Arg-196, Glu-201, Asp-237, Asp-239, Ser-241, Thr-243, and Glu-248.

Belongs to the calbindin family. Expressed in a large number of neuron of the brain and the thoracic ganglion as well as in two small muscles of the thorax.

The chain is Calbindin-32 (Cbp53E) from Drosophila melanogaster (Fruit fly).